Consider the following 192-residue polypeptide: MGKAKTTRKFAQVKRVINLKDQRLQKKDQKKEKEKTTKNGELVREIPQMASNLFFQFNESLGPPYHVIIDTNFINFCLQQKIDLFEGLMTCLYAKTIPCISDCVMAELEKLGIRYRIALRIAKDERFERLPCTHKGTYADDCIVQRVMQHKCYLVATNDKNLKQRIRKIPGIPILSVANHKIRVERLVDVVD.

Residues 65–164 enclose the PINc domain; that stretch reads YHVIIDTNFI…VATNDKNLKQ (100 aa).

The protein belongs to the UTP23/FCF1 family. FCF1 subfamily.

It localises to the nucleus. Its subcellular location is the nucleolus. In terms of biological role, essential protein involved in pre-rRNA processing and 40S ribosomal subunit assembly. Required for the early cleavage steps of 35S rRNA at the A(0), A(1), and A(2) sites. This Schizosaccharomyces pombe (strain 972 / ATCC 24843) (Fission yeast) protein is rRNA-processing protein fcf1 (fcf1).